A 542-amino-acid polypeptide reads, in one-letter code: Chaperonin GroEL 2 (542 aa).

Residues threonine 30–proline 33, lysine 51, aspartate 87–threonine 91, glycine 415, and aspartate 496 each bind ATP. Residues alanine 523–phenylalanine 542 are disordered. The span at glutamine 533–phenylalanine 542 shows a compositional bias: pro residues.

Belongs to the chaperonin (HSP60) family. As to quaternary structure, forms a cylinder of 14 subunits composed of two heptameric rings stacked back-to-back. Interacts with the co-chaperonin GroES.

Its subcellular location is the cytoplasm. It catalyses the reaction ATP + H2O + a folded polypeptide = ADP + phosphate + an unfolded polypeptide.. Together with its co-chaperonin GroES, plays an essential role in assisting protein folding. The GroEL-GroES system forms a nano-cage that allows encapsulation of the non-native substrate proteins and provides a physical environment optimized to promote and accelerate protein folding. The protein is Chaperonin GroEL 2 of Sinorhizobium medicae (strain WSM419) (Ensifer medicae).